Reading from the N-terminus, the 148-residue chain is MKLAVFAVLISTVAAFVAPNGVQRAATTELNAERREFLSAAAVAAGLAFPLTANAIRDYENVGYLGGSEIVDVNNANVRVYLKMPGLYPTLAGKIASNGPYNAVGDLYNIPGLSGKEKELLKKYESRFTAQKPQADYVIDRFNNGLYR.

The N-terminal 32 residues, 1–32 (MKLAVFAVLISTVAAFVAPNGVQRAATTELNA), are a transit peptide targeting the chloroplast. Residues 33–54 (ERREFLSAAAVAAGLAFPLTAN) constitute a thylakoid transit peptide.

It belongs to the PsbU family. In terms of assembly, PSII is composed of 1 copy each of membrane proteins PsbA, PsbB, PsbC, PsbD, PsbE, PsbF, PsbH, PsbI, PsbJ, PsbK, PsbL, PsbM, PsbT, PsbX, PsbY, PsbZ, Psb30/Ycf12, at least 3 peripheral proteins of the oxygen-evolving complex and a large number of cofactors. It forms dimeric complexes. The oxygen-evolving complex may be composed of PsbO, PsbQ', PsbV and PsbU.

The protein resides in the plastid. It is found in the chloroplast thylakoid membrane. In terms of biological role, one of the extrinsic, lumenal subunits of photosystem II (PSII), which stabilize and protect the oxygen-evolving complex. PSII is a light-driven water plastoquinone oxidoreductase, using light energy to abstract electrons from H(2)O, generating a proton gradient subsequently used for ATP formation. Stabilizes the structure of photosystem II oxygen-evolving complex (OEC), the ion environment of oxygen evolution and protects the OEC against heat-induced inactivation. The sequence is that of Photosystem II extrinsic protein U, chloroplastic from Phaeodactylum tricornutum (Diatom).